Consider the following 215-residue polypeptide: Octanoyltransferase (215 aa).

The BPL/LPL catalytic domain occupies 35–210; sequence PDTPDQLWVV…HCLEAIVEYG (176 aa). Residues 74–81, 141–143, and 154–156 contribute to the substrate site; these read RGGQVTYH, SVG, and GLA. C172 (acyl-thioester intermediate) is an active-site residue.

Belongs to the LipB family.

Its subcellular location is the cytoplasm. The catalysed reaction is octanoyl-[ACP] + L-lysyl-[protein] = N(6)-octanoyl-L-lysyl-[protein] + holo-[ACP] + H(+). It participates in protein modification; protein lipoylation via endogenous pathway; protein N(6)-(lipoyl)lysine from octanoyl-[acyl-carrier-protein]: step 1/2. Catalyzes the transfer of endogenously produced octanoic acid from octanoyl-acyl-carrier-protein onto the lipoyl domains of lipoate-dependent enzymes. Lipoyl-ACP can also act as a substrate although octanoyl-ACP is likely to be the physiological substrate. In Alkalilimnicola ehrlichii (strain ATCC BAA-1101 / DSM 17681 / MLHE-1), this protein is Octanoyltransferase.